The following is a 216-amino-acid chain: GTP-binding nuclear protein Ran, testis-specific isoform (216 aa).

The residue at position 2 (A2) is an N-acetylalanine. One can recognise a Small GTPase Ran-type domain in the interval 7 to 171 (PQIQFKLVLV…FWLARKLIGD (165 aa)). 17-24 (GDGGTGKT) serves as a coordination point for GTP. At T24 the chain carries Phosphothreonine. A switch-I region spans residues 37–45 (KEYVATLGV). K60 is modified (N6-acetyllysine). Position 65 to 69 (65 to 69 (DTAGQ)) interacts with GTP. The interval 68 to 84 (GQEKFGGLRDGYYIQAQ) is switch-II. N6-acetyllysine; alternate is present on K71. K71 participates in a covalent cross-link: Glycyl lysine isopeptide (Lys-Gly) (interchain with G-Cter in SUMO2); alternate. K71 participates in a covalent cross-link: Glycyl lysine isopeptide (Lys-Gly) (interchain with G-Cter in ubiquitin); alternate. Residue K99 is modified to N6-acetyllysine. 122–125 (NKVD) serves as a coordination point for GTP. Residue K134 is modified to N6-acetyllysine. A Glycyl lysine isopeptide (Lys-Gly) (interchain with G-Cter in SUMO2) cross-link involves residue K152. At K159 the chain carries N6-acetyllysine; alternate. The residue at position 159 (K159) is an N6-succinyllysine; alternate.

This sequence belongs to the small GTPase superfamily. Ran family. As to expression, testis specific.

The protein resides in the nucleus. The catalysed reaction is GTP + H2O = GDP + phosphate + H(+). GTP-binding protein involved in nucleocytoplasmic transport. Required for the import of protein into the nucleus and also for RNA export. Involved in chromatin condensation and control of cell cycle. This chain is GTP-binding nuclear protein Ran, testis-specific isoform (Rasl2-9), found in Rattus norvegicus (Rat).